A 2340-amino-acid chain; its full sequence is Proto-oncogene tyrosine-protein kinase ROS (2340 aa).

Positions 1–28 (MKNICWLTLKLVKFVVLGCIIWISVAQS) are cleaved as a signal peptide. Topologically, residues 29 to 1854 (TVLSSCLTSC…EDGVWITETS (1826 aa)) are extracellular. An N-linked (GlcNAc...) asparagine glycan is attached at N53. Fibronectin type-III domains are found at residues 111-206 (LPTA…VPET) and 207-295 (APLI…PSPS). N-linked (GlcNAc...) asparagine glycans are attached at residues N334 and N362. Positions 567 to 667 (LPGHPQEVSV…APSVGTTLVP (101 aa)) constitute a Fibronectin type-III 3 domain. N935 and N1011 each carry an N-linked (GlcNAc...) asparagine glycan. 2 Fibronectin type-III domains span residues 943 to 1038 (IPDP…SVPS) and 1039 to 1146 (APEN…TSEI). N-linked (GlcNAc...) asparagine glycosylation occurs at N1243. Fibronectin type-III domains are found at residues 1442 to 1549 (ASDM…TKSG), 1550 to 1649 (VPGA…VNMF), 1651 to 1744 (TPEK…TKAG), and 1745 to 1846 (VPSK…LVED). N1676 carries an N-linked (GlcNAc...) asparagine glycan. The helical transmembrane segment at 1855–1875 (FILTIIVGIFLVATVPLTFVW) threads the bilayer. The Cytoplasmic segment spans residues 1876–2340 (HRSLKSHKAS…AHSEHGDVSE (465 aa)). A Protein kinase domain is found at 1938–2216 (LSLRLLLGSG…QLQLFRNVFL (279 aa)). Residues 1944-1952 (LGSGAFGEV) and K1973 each bind ATP. Residue D2072 is the Proton acceptor of the active site. Residues Y2267 and Y2327 each carry the phosphotyrosine; by autocatalysis modification.

This sequence belongs to the protein kinase superfamily. Tyr protein kinase family. Insulin receptor subfamily. As to quaternary structure, interacts with PTPN11; may activate the PI3 kinase-mTOR signaling pathway. Interacts with VAV3; constitutive interaction mediating VAV3 phosphorylation. Interacts with PTPN6 (via SH2 1 domain); the interaction is direct and promotes ROS1 dephosphorylation. Phosphorylated. Probably autophosphorylates. Phosphorylation at Tyr-2267 and/or Tyr-2327 recruits PTPN11. Phosphorylation at Tyr-2267 is required for the interaction with PTPN6 that mediates ROS1 dephosphorylation. Phosphorylation at Tyr-2267 stimulates the kinase activity and the activation of the ERK1 signaling cascade. As to expression, expressed by epithelial cells of the caput epididymis (at protein level).

It localises to the cell membrane. It catalyses the reaction L-tyrosyl-[protein] + ATP = O-phospho-L-tyrosyl-[protein] + ADP + H(+). With respect to regulation, inhibited by dephosphorylation by PTPN6. Its function is as follows. Receptor tyrosine kinase (RTK) that plays a role in epithelial cell differentiation and regionalization of the proximal epididymal epithelium. NELL2 is an endogenous ligand for ROS1. Upon endogenous stimulation by NELL2, ROS1 activates the intracellular signaling pathway and triggers epididymal epithelial differentiation and subsequent sperm maturation. May activate several downstream signaling pathways related to cell differentiation, proliferation, growth and survival including the PI3 kinase-mTOR signaling pathway. Mediates the phosphorylation of PTPN11, an activator of this pathway. May also phosphorylate and activate the transcription factor STAT3 to control anchorage-independent cell growth. Mediates the phosphorylation and the activation of VAV3, a guanine nucleotide exchange factor regulating cell morphology. May activate other downstream signaling proteins including AKT1, MAPK1, MAPK3, IRS1, and PLCG2. In Mus musculus (Mouse), this protein is Proto-oncogene tyrosine-protein kinase ROS (Ros1).